The chain runs to 177 residues: Large ribosomal subunit protein uL6 (177 aa).

This sequence belongs to the universal ribosomal protein uL6 family. As to quaternary structure, part of the 50S ribosomal subunit.

Its function is as follows. This protein binds to the 23S rRNA, and is important in its secondary structure. It is located near the subunit interface in the base of the L7/L12 stalk, and near the tRNA binding site of the peptidyltransferase center. The polypeptide is Large ribosomal subunit protein uL6 (Leptothrix cholodnii (strain ATCC 51168 / LMG 8142 / SP-6) (Leptothrix discophora (strain SP-6))).